The primary structure comprises 245 residues: MAPK-interacting and spindle-stabilizing protein-like (245 aa).

The segment at 1–245 (MSDEFSLADA…PMPGGPHSYH (245 aa)) is disordered. Serine 2 is subject to N-acetylserine. Residues serine 2, serine 6, and serine 15 each carry the phosphoserine modification. The span at 17–26 (AKTSAVSNTK) shows a compositional bias: polar residues. Residues 34-51 (WPGSNPWNNPSAPSSVPS) are compositionally biased toward low complexity. Composition is skewed to pro residues over residues 74–127 (SVPP…PELP), 164–190 (PNMPYPSPGPYPAPPPPQAPGAAPPVP), and 198–207 (AWGPPAPYPA).

It belongs to the MISS family.

This is MAPK-interacting and spindle-stabilizing protein-like (MAPK1IP1L) from Homo sapiens (Human).